The primary structure comprises 390 residues: Flap endonuclease 1-1 (390 aa).

The tract at residues 1–108 (MGIHQLMQFL…GELARRKKLK (108 aa)) is N-domain. D34 provides a ligand contact to Mg(2+). Position 74 (R74) interacts with DNA. D90, E162, E164, D183, and D185 together coordinate Mg(2+). An I-domain region spans residues 126 to 254 (QALLQHQRTT…GTAYKLIKEF (129 aa)). E162 contributes to the DNA binding site. DNA-binding residues include G232 and D234. Residue D234 participates in Mg(2+) binding. An interaction with PCNA region spans residues 348–356 (FQSRLENFF). The segment at 359-390 (TTKIIHPNNSKAKGKANKKNEQTQKSGGKKKI) is disordered.

This sequence belongs to the XPG/RAD2 endonuclease family. FEN1 subfamily. In terms of assembly, interacts with PCNA. Three molecules of FEN1 bind to one PCNA trimer with each molecule binding to one PCNA monomer. PCNA stimulates the nuclease activity without altering cleavage specificity. Mg(2+) is required as a cofactor. Phosphorylated. Phosphorylation upon DNA damage induces relocalization to the nuclear plasma.

The protein localises to the nucleus. Its subcellular location is the nucleolus. It is found in the nucleoplasm. It localises to the mitochondrion. In terms of biological role, structure-specific nuclease with 5'-flap endonuclease and 5'-3' exonuclease activities involved in DNA replication and repair. During DNA replication, cleaves the 5'-overhanging flap structure that is generated by displacement synthesis when DNA polymerase encounters the 5'-end of a downstream Okazaki fragment. It enters the flap from the 5'-end and then tracks to cleave the flap base, leaving a nick for ligation. Also involved in the long patch base excision repair (LP-BER) pathway, by cleaving within the apurinic/apyrimidinic (AP) site-terminated flap. Acts as a genome stabilization factor that prevents flaps from equilibrating into structures that lead to duplications and deletions. Also possesses 5'-3' exonuclease activity on nicked or gapped double-stranded DNA, and exhibits RNase H activity. Also involved in replication and repair of rDNA and in repairing mitochondrial DNA. This Paramecium tetraurelia protein is Flap endonuclease 1-1.